We begin with the raw amino-acid sequence, 131 residues long: Large ribosomal subunit protein bL12c (131 aa).

Belongs to the bacterial ribosomal protein bL12 family. In terms of assembly, homodimer. Part of the ribosomal stalk of the 50S ribosomal subunit. Forms a multimeric L10(L12)X complex, where L10 forms an elongated spine to which 2 to 4 L12 dimers bind in a sequential fashion. Binds GTP-bound translation factors.

Its subcellular location is the plastid. It localises to the chloroplast. Its function is as follows. Forms part of the ribosomal stalk which helps the ribosome interact with GTP-bound translation factors. Is thus essential for accurate translation. This is Large ribosomal subunit protein bL12c from Euglena gracilis.